Here is a 198-residue protein sequence, read N- to C-terminus: Small ribosomal subunit protein uS4c (198 aa).

The region spanning 85–145 (LRLDATIFRL…PKKFTIILIC (61 aa)) is the S4 RNA-binding domain.

Belongs to the universal ribosomal protein uS4 family. In terms of assembly, part of the 30S ribosomal subunit.

Its subcellular location is the plastid. It is found in the apicoplast. One of the primary rRNA binding proteins, it binds directly to 16S rRNA where it nucleates assembly of the body of the 30S subunit. The chain is Small ribosomal subunit protein uS4c (rps4) from Toxoplasma gondii.